The sequence spans 116 residues: Large ribosomal subunit protein bL17 (116 aa).

The protein belongs to the bacterial ribosomal protein bL17 family. As to quaternary structure, part of the 50S ribosomal subunit. Contacts protein L32.

In Nostoc punctiforme (strain ATCC 29133 / PCC 73102), this protein is Large ribosomal subunit protein bL17.